Consider the following 130-residue polypeptide: Small ribosomal subunit protein uS9 (130 aa).

Belongs to the universal ribosomal protein uS9 family.

The protein is Small ribosomal subunit protein uS9 of Bacillus anthracis (strain A0248).